Reading from the N-terminus, the 662-residue chain is Biosynthetic arginine decarboxylase (662 aa).

Lysine 127 carries the post-translational modification N6-(pyridoxal phosphate)lysine. Substrate is bound at residue 307-317 (FDVGGGLGVDY).

Belongs to the Orn/Lys/Arg decarboxylase class-II family. SpeA subfamily. In terms of assembly, homotetramer. It depends on Mg(2+) as a cofactor. Pyridoxal 5'-phosphate serves as cofactor.

Its subcellular location is the periplasm. The catalysed reaction is L-arginine + H(+) = agmatine + CO2. Its pathway is amine and polyamine biosynthesis; agmatine biosynthesis; agmatine from L-arginine: step 1/1. In terms of biological role, catalyzes the biosynthesis of agmatine from arginine. In Shigella flexneri, this protein is Biosynthetic arginine decarboxylase.